A 460-amino-acid polypeptide reads, in one-letter code: Serine--tRNA ligase (460 aa).

A compositionally biased stretch (basic and acidic residues) spans 50-65; the sequence is DRNEVSSKIGELKQAG. 2 disordered regions span residues 50-71 and 109-129; these read DRNE…DAAQ and PDED…RREG. The span at 109-121 shows a compositional bias: acidic residues; sequence PDEDAPVGDSEAE. 241–243 is a binding site for L-serine; the sequence is TAE. ATP is bound by residues 272-274 and Val288; that span reads RRE. An L-serine-binding site is contributed by Glu295. ATP is bound at residue 368–371; the sequence is EVSS. Ser404 is a binding site for L-serine.

This sequence belongs to the class-II aminoacyl-tRNA synthetase family. Type-1 seryl-tRNA synthetase subfamily. Homodimer. The tRNA molecule binds across the dimer.

The protein localises to the cytoplasm. It catalyses the reaction tRNA(Ser) + L-serine + ATP = L-seryl-tRNA(Ser) + AMP + diphosphate + H(+). The catalysed reaction is tRNA(Sec) + L-serine + ATP = L-seryl-tRNA(Sec) + AMP + diphosphate + H(+). It functions in the pathway aminoacyl-tRNA biosynthesis; selenocysteinyl-tRNA(Sec) biosynthesis; L-seryl-tRNA(Sec) from L-serine and tRNA(Sec): step 1/1. Catalyzes the attachment of serine to tRNA(Ser). Is also able to aminoacylate tRNA(Sec) with serine, to form the misacylated tRNA L-seryl-tRNA(Sec), which will be further converted into selenocysteinyl-tRNA(Sec). This Halobacterium salinarum (strain ATCC 29341 / DSM 671 / R1) protein is Serine--tRNA ligase.